The following is a 467-amino-acid chain: Fumarate hydratase class II (467 aa).

Substrate is bound by residues 98-100 (SGT), Arg126, 129-132 (HPND), 139-141 (SSN), and Thr187. Residue His188 is the Proton donor/acceptor of the active site. Ser318 is an active-site residue. Substrate contacts are provided by residues Ser319 and 324-326 (KVN).

It belongs to the class-II fumarase/aspartase family. Fumarase subfamily. Homotetramer.

Its subcellular location is the cytoplasm. The enzyme catalyses (S)-malate = fumarate + H2O. It functions in the pathway carbohydrate metabolism; tricarboxylic acid cycle; (S)-malate from fumarate: step 1/1. Its function is as follows. Involved in the TCA cycle. Catalyzes the stereospecific interconversion of fumarate to L-malate. This is Fumarate hydratase class II from Escherichia coli O157:H7.